A 156-amino-acid chain; its full sequence is Small ribosomal subunit protein uS7 (156 aa).

This sequence belongs to the universal ribosomal protein uS7 family. Part of the 30S ribosomal subunit. Contacts proteins S9 and S11.

In terms of biological role, one of the primary rRNA binding proteins, it binds directly to 16S rRNA where it nucleates assembly of the head domain of the 30S subunit. Is located at the subunit interface close to the decoding center, probably blocks exit of the E-site tRNA. This chain is Small ribosomal subunit protein uS7, found in Bifidobacterium longum (strain NCC 2705).